The chain runs to 316 residues: Olfactory receptor 2G6 (316 aa).

Residues 1–25 (MEETNNSSEKGFLLLGFSDQPQLER) lie on the Extracellular side of the membrane. 2 N-linked (GlcNAc...) asparagine glycosylation sites follow: asparagine 5 and asparagine 6. A helical transmembrane segment spans residues 26-49 (FLFAIILYFYVLSLLGNTALILVC). At 50–57 (CLDSRLHT) the chain is on the cytoplasmic side. Residues 58-79 (PMYFFLSNLSCVDICFTTSVAP) form a helical membrane-spanning segment. Residues 80-100 (QLLVTMNKKDKTMSYGGCVAQ) are Extracellular-facing. Cysteine 97 and cysteine 189 form a disulfide bridge. Residues 101–120 (LYVAMGLGSSECILLAVMAY) form a helical membrane-spanning segment. The Cytoplasmic segment spans residues 121–139 (DRYAAVCRPLRYIAIMHPR). Residues 140–158 (FCASLAGGAWLSGLITSLI) traverse the membrane as a helical segment. Over 159-195 (QCSLTVQLPLCGHRTLDHIFCEVPVLIKLACVDTTFN) the chain is Extracellular. The chain crosses the membrane as a helical span at residues 196-219 (EAELFVASVVFLIVPVLLILVSYG). At 220 to 236 (FITQAVLRIKSAAGRQK) the chain is on the cytoplasmic side. A helical transmembrane segment spans residues 237–259 (AFGTCSSHLVVVIIFYGTIIFMY). At 260 to 272 (LQPANRRSKNQGK) the chain is on the extracellular side. Residues 273–292 (FVSLFYTIVTPLLNPIIYTL) traverse the membrane as a helical segment. The Cytoplasmic portion of the chain corresponds to 293 to 316 (RNKDVKGALRTLILGSAAGQSHKD).

This sequence belongs to the G-protein coupled receptor 1 family.

The protein resides in the cell membrane. Functionally, odorant receptor. This chain is Olfactory receptor 2G6 (OR2G6), found in Homo sapiens (Human).